The sequence spans 131 residues: Glycine cleavage system H protein (131 aa).

The Lipoyl-binding domain occupies 24–106; the sequence is IATLGISAFA…HGEGWLLKVR (83 aa). At Lys-65 the chain carries N6-lipoyllysine.

It belongs to the GcvH family. As to quaternary structure, the glycine cleavage system is composed of four proteins: P, T, L and H. (R)-lipoate serves as cofactor.

In terms of biological role, the glycine cleavage system catalyzes the degradation of glycine. The H protein shuttles the methylamine group of glycine from the P protein to the T protein. The sequence is that of Glycine cleavage system H protein from Microcystis aeruginosa (strain NIES-843 / IAM M-2473).